The chain runs to 54 residues: uncharacterized protein (54 aa).

Positions 1–23 (MKELIFFLLIIVILFVVFMVVSS) are cleaved as a signal peptide.

This is an uncharacterized protein from Acheta domesticus (House cricket).